The chain runs to 372 residues: tRNA-specific 2-thiouridylase MnmA 1 (372 aa).

Residues 26-33 (AISGGVDS) and M52 contribute to the ATP site. Residue C118 is the Nucleophile of the active site. Cysteines 118 and 214 form a disulfide. G142 serves as a coordination point for ATP. The interaction with tRNA stretch occupies residues 164–166 (KDQ). Residue C214 is the Cysteine persulfide intermediate of the active site.

The protein belongs to the MnmA/TRMU family.

The protein localises to the cytoplasm. The enzyme catalyses S-sulfanyl-L-cysteinyl-[protein] + uridine(34) in tRNA + AH2 + ATP = 2-thiouridine(34) in tRNA + L-cysteinyl-[protein] + A + AMP + diphosphate + H(+). Catalyzes the 2-thiolation of uridine at the wobble position (U34) of tRNA, leading to the formation of s(2)U34. This Syntrophus aciditrophicus (strain SB) protein is tRNA-specific 2-thiouridylase MnmA 1.